The primary structure comprises 172 residues: Crossover junction endodeoxyribonuclease RuvC (172 aa).

Catalysis depends on residues Asp-12, Glu-71, and Asp-143. Positions 12, 71, and 143 each coordinate Mg(2+).

This sequence belongs to the RuvC family. Homodimer which binds Holliday junction (HJ) DNA. The HJ becomes 2-fold symmetrical on binding to RuvC with unstacked arms; it has a different conformation from HJ DNA in complex with RuvA. In the full resolvosome a probable DNA-RuvA(4)-RuvB(12)-RuvC(2) complex forms which resolves the HJ. Mg(2+) is required as a cofactor.

The protein localises to the cytoplasm. The catalysed reaction is Endonucleolytic cleavage at a junction such as a reciprocal single-stranded crossover between two homologous DNA duplexes (Holliday junction).. In terms of biological role, the RuvA-RuvB-RuvC complex processes Holliday junction (HJ) DNA during genetic recombination and DNA repair. Endonuclease that resolves HJ intermediates. Cleaves cruciform DNA by making single-stranded nicks across the HJ at symmetrical positions within the homologous arms, yielding a 5'-phosphate and a 3'-hydroxyl group; requires a central core of homology in the junction. The consensus cleavage sequence is 5'-(A/T)TT(C/G)-3'. Cleavage occurs on the 3'-side of the TT dinucleotide at the point of strand exchange. HJ branch migration catalyzed by RuvA-RuvB allows RuvC to scan DNA until it finds its consensus sequence, where it cleaves and resolves the cruciform DNA. This Coxiella burnetii (strain CbuG_Q212) (Coxiella burnetii (strain Q212)) protein is Crossover junction endodeoxyribonuclease RuvC.